A 117-amino-acid polypeptide reads, in one-letter code: Large ribosomal subunit protein uL18 (117 aa).

It belongs to the universal ribosomal protein uL18 family. As to quaternary structure, part of the 50S ribosomal subunit; part of the 5S rRNA/L5/L18/L25 subcomplex. Contacts the 5S and 23S rRNAs.

This is one of the proteins that bind and probably mediate the attachment of the 5S RNA into the large ribosomal subunit, where it forms part of the central protuberance. In Idiomarina loihiensis (strain ATCC BAA-735 / DSM 15497 / L2-TR), this protein is Large ribosomal subunit protein uL18.